We begin with the raw amino-acid sequence, 608 residues long: MATNLLCLSNKLSSPTPTPSTRFPQSKNFITQKTSLANPKPWRVICATSSQFTQITEHNSRRSANYQPNLWNFEFLQSLENDLKVEKLEEKATKLEEEVRCMINRVDTQPLSLLELIDDVQRLGLTYKFEKDIIKALENIVLLDENKKNKSDLHATALSFRLLRQHGFEVSQDVFERFKDKEGGFSGELKGDVQGLLSLYEASYLGFEGENLLEEARTFSITHLKNNLKEGINTKVAEQVSHALELPYHQRLHRLEARWFLDKYEPKEPHHQLLLELAKLDFNMVQTLHQKELQDLSRWWTEMGLASKLDFVRDRLMEVYFWALGMAPDPQFGECRKAVTKMFGLVTIIDDVYDVYGTLDELQLFTDAVERWDVNAINTLPDYMKLCFLALYNTVNDTSYSILKEKGHNNLSYLTKSWRELCKAFLQEAKWSNNKIIPAFSKYLENASVSSSGVALLAPSYFSVCQQQEDISDHALRSLTDFHGLVRSSCVIFRLCNDLATSAAELERGETTNSIISYMHENDGTSEEQAREELRKLIDAEWKKMNRERVSDSTLLPKAFMEIAVNMARVSHCTYQYGDGLGRPDYATENRIKLLLIDPFPINQLMYV.

A chloroplast-targeting transit peptide spans 1–45 (MATNLLCLSNKLSSPTPTPSTRFPQSKNFITQKTSLANPKPWRVI). Residue Asp-350 participates in dimethylallyl diphosphate binding. Asp-350 and Asp-354 together coordinate Mg(2+). The DDXXD motif motif lies at 350 to 354 (DDVYD). Glu-428, Arg-494, and Asn-497 together coordinate dimethylallyl diphosphate. The Mg(2+) site is built by Asn-497, Thr-501, and Glu-505.

This sequence belongs to the terpene synthase family. Tpsb subfamily. Mg(2+) is required as a cofactor. Mn(2+) serves as cofactor.

The protein resides in the plastid. It localises to the chloroplast. The enzyme catalyses dimethylallyl diphosphate = isoprene + diphosphate. Its function is as follows. Lyase that catalyzes the formation of isoprene from dimethylallyl diphosphate. This Pueraria montana var. lobata (Kudzu vine) protein is Isoprene synthase, chloroplastic (ISPS).